Reading from the N-terminus, the 364-residue chain is Chorismate synthase (364 aa).

The tract at residues 41–60 (MQHDLDRRRPGTSRYTTARR) is disordered. NADP(+)-binding residues include Arg-48 and Arg-54. Residues 125–127 (RSS), 238–239 (NA), Gly-278, 293–297 (KPTSS), and Arg-319 contribute to the FMN site.

Belongs to the chorismate synthase family. In terms of assembly, homotetramer. FMNH2 is required as a cofactor.

It catalyses the reaction 5-O-(1-carboxyvinyl)-3-phosphoshikimate = chorismate + phosphate. It functions in the pathway metabolic intermediate biosynthesis; chorismate biosynthesis; chorismate from D-erythrose 4-phosphate and phosphoenolpyruvate: step 7/7. In terms of biological role, catalyzes the anti-1,4-elimination of the C-3 phosphate and the C-6 proR hydrogen from 5-enolpyruvylshikimate-3-phosphate (EPSP) to yield chorismate, which is the branch point compound that serves as the starting substrate for the three terminal pathways of aromatic amino acid biosynthesis. This reaction introduces a second double bond into the aromatic ring system. This Shewanella putrefaciens (strain CN-32 / ATCC BAA-453) protein is Chorismate synthase.